A 345-amino-acid chain; its full sequence is Anthranilate phosphoribosyltransferase (345 aa).

5-phospho-alpha-D-ribose 1-diphosphate is bound by residues Gly-84, 87 to 88, Thr-92, 94 to 97, 112 to 120, and Ser-124; these read GD, NIST, and KHGGRSVSS. Residue Gly-84 participates in anthranilate binding. Ser-96 is a binding site for Mg(2+). Arg-170 lines the anthranilate pocket. The Mg(2+) site is built by Asp-229 and Glu-230.

The protein belongs to the anthranilate phosphoribosyltransferase family. Homodimer. It depends on Mg(2+) as a cofactor.

The catalysed reaction is N-(5-phospho-beta-D-ribosyl)anthranilate + diphosphate = 5-phospho-alpha-D-ribose 1-diphosphate + anthranilate. It functions in the pathway amino-acid biosynthesis; L-tryptophan biosynthesis; L-tryptophan from chorismate: step 2/5. In terms of biological role, catalyzes the transfer of the phosphoribosyl group of 5-phosphorylribose-1-pyrophosphate (PRPP) to anthranilate to yield N-(5'-phosphoribosyl)-anthranilate (PRA). The sequence is that of Anthranilate phosphoribosyltransferase from Herminiimonas arsenicoxydans.